We begin with the raw amino-acid sequence, 270 residues long: Glucosamine-6-phosphate deaminase (270 aa).

Aspartate 72 acts as the Proton acceptor; for enolization step in catalysis. Aspartate 141 acts as the For ring-opening step in catalysis. Histidine 143 functions as the Proton acceptor; for ring-opening step in the catalytic mechanism. The active-site For ring-opening step is glutamate 148.

This sequence belongs to the glucosamine/galactosamine-6-phosphate isomerase family. NagB subfamily. Homohexamer.

The catalysed reaction is alpha-D-glucosamine 6-phosphate + H2O = beta-D-fructose 6-phosphate + NH4(+). Its pathway is amino-sugar metabolism; N-acetylneuraminate degradation; D-fructose 6-phosphate from N-acetylneuraminate: step 5/5. With respect to regulation, allosterically activated by N-acetylglucosamine 6-phosphate (GlcNAc6P). In terms of biological role, catalyzes the reversible isomerization-deamination of glucosamine 6-phosphate (GlcN6P) to form fructose 6-phosphate (Fru6P) and ammonium ion. The protein is Glucosamine-6-phosphate deaminase of Photorhabdus laumondii subsp. laumondii (strain DSM 15139 / CIP 105565 / TT01) (Photorhabdus luminescens subsp. laumondii).